An 80-amino-acid chain; its full sequence is Large ribosomal subunit protein bL31B (80 aa).

It belongs to the bacterial ribosomal protein bL31 family. Type B subfamily. In terms of assembly, part of the 50S ribosomal subunit.

This is Large ribosomal subunit protein bL31B from Stenotrophomonas maltophilia (strain K279a).